A 275-amino-acid chain; its full sequence is MLNLLVLALPLLVSLVHTAPAPGQALERAGIVGGKEAPGHKWPWQVSLRCLDQYWKHFCGGSLIHPQWVLTAAHCFGPEKADPLYIRVQLGEQHLYYQDRLLLVSRIIVHPNYYDEVNGADIALLELEDPVNLSSHVQPVTLPPASETFPKGTRCWVTGWGDVHSGWPLPPPYPLKQVRVPIVENSECDMQYHLGLSTGDNIPIVRDDMLCAGSEGHDSCQGDSGGPLVCRVNGTWLQAGVVSWGEGCALPNRPGIYTRVTHYLDWIHQCIPRES.

The signal sequence occupies residues 1-20; the sequence is MLNLLVLALPLLVSLVHTAP. Residues 21–30 constitute a propeptide, activation peptide; sequence APGQALERAG. The Peptidase S1 domain occupies 31 to 272; sequence IVGGKEAPGH…YLDWIHQCIP (242 aa). A disulfide bridge connects residues cysteine 59 and cysteine 75. Catalysis depends on charge relay system residues histidine 74 and aspartate 121. Asparagine 132 is a glycosylation site (N-linked (GlcNAc...) asparagine). Cystine bridges form between cysteine 155–cysteine 230, cysteine 188–cysteine 211, and cysteine 220–cysteine 248. Serine 224 functions as the Charge relay system in the catalytic mechanism. A glycan (N-linked (GlcNAc...) asparagine) is linked at asparagine 233.

The protein belongs to the peptidase S1 family. Tryptase subfamily. As to quaternary structure, homotetramer.

It localises to the secreted. The catalysed reaction is Preferential cleavage: Arg-|-Xaa, Lys-|-Xaa, but with more restricted specificity than trypsin.. In terms of biological role, tryptase is the major neutral protease present in mast cells and is secreted upon the coupled activation-degranulation response of this cell type. The sequence is that of Tryptase (MCT7) from Sus scrofa (Pig).